The primary structure comprises 147 residues: MAKEFSRTRRIGQQLQQELAVVLQRDMKDPRIGFVTVNDVDVSRDLSYAKVFVTFFEEDKDVVQEKLNALIAAAPYIRTLVAGRMKLRVMPEIRFVYDSSLVEGMRMSNLVSQVINSDKAKQQQFGSVDDDVIENDIEESDDTEGKV.

The disordered stretch occupies residues 122–147 (QQQFGSVDDDVIENDIEESDDTEGKV). The segment covering 128 to 147 (VDDDVIENDIEESDDTEGKV) has biased composition (acidic residues).

Belongs to the RbfA family. Monomer. Binds 30S ribosomal subunits, but not 50S ribosomal subunits or 70S ribosomes.

Its subcellular location is the cytoplasm. Functionally, one of several proteins that assist in the late maturation steps of the functional core of the 30S ribosomal subunit. Associates with free 30S ribosomal subunits (but not with 30S subunits that are part of 70S ribosomes or polysomes). Required for efficient processing of 16S rRNA. May interact with the 5'-terminal helix region of 16S rRNA. The polypeptide is Ribosome-binding factor A (Shewanella oneidensis (strain ATCC 700550 / JCM 31522 / CIP 106686 / LMG 19005 / NCIMB 14063 / MR-1)).